A 255-amino-acid polypeptide reads, in one-letter code: 4-hydroxy-tetrahydrodipicolinate reductase (255 aa).

Residues 9–14, Asp35, 89–91, and 115–118 contribute to the NAD(+) site; these read GFKGKM, GTT, and APNF. The active-site Proton donor/acceptor is His145. His146 is a binding site for (S)-2,3,4,5-tetrahydrodipicolinate. The active-site Proton donor is Lys149. 155–156 contacts (S)-2,3,4,5-tetrahydrodipicolinate; sequence GT.

Belongs to the DapB family.

The protein localises to the cytoplasm. It carries out the reaction (S)-2,3,4,5-tetrahydrodipicolinate + NAD(+) + H2O = (2S,4S)-4-hydroxy-2,3,4,5-tetrahydrodipicolinate + NADH + H(+). The catalysed reaction is (S)-2,3,4,5-tetrahydrodipicolinate + NADP(+) + H2O = (2S,4S)-4-hydroxy-2,3,4,5-tetrahydrodipicolinate + NADPH + H(+). Its pathway is amino-acid biosynthesis; L-lysine biosynthesis via DAP pathway; (S)-tetrahydrodipicolinate from L-aspartate: step 4/4. In terms of biological role, catalyzes the conversion of 4-hydroxy-tetrahydrodipicolinate (HTPA) to tetrahydrodipicolinate. This Streptococcus pneumoniae (strain P1031) protein is 4-hydroxy-tetrahydrodipicolinate reductase.